Reading from the N-terminus, the 199-residue chain is Interleukin-11 (199 aa).

A signal peptide spans 1-21 (MNCVCRLVLVVLSLWPDTAVA). The tract at residues 182–190 (HLTLDWAVR) is important for interaction with IL11RA and for the stimulation of cell proliferation.

Belongs to the IL-6 superfamily. In terms of assembly, interacts with IL11RA to associate with IL6ST, giving rise to a multimeric signaling complex.

It is found in the secreted. Its function is as follows. Cytokine that stimulates the proliferation of hematopoietic stem cells and megakaryocyte progenitor cells and induces megakaryocyte maturation resulting in increased platelet production. Also promotes the proliferation of hepatocytes in response to liver damage. Binding to its receptor formed by IL6ST and IL11RA activates a signaling cascade that promotes cell proliferation. Signaling leads to the activation of intracellular protein kinases and the phosphorylation of STAT3. The interaction with the membrane-bound IL11RA and IL6ST stimulates 'classic signaling', whereas the binding of IL11 and soluble IL11RA to IL6ST stimulates 'trans-signaling'. The sequence is that of Interleukin-11 from Homo sapiens (Human).